A 778-amino-acid polypeptide reads, in one-letter code: Protein PHOTOPERIODIC CONTROL OF HYPOCOTYL 1 (778 aa).

Disordered regions lie at residues 74–95 (QKRE…VGSS), 186–283 (HNRG…NSAT), and 316–335 (KTSP…KEAS). Residues 198–212 (SSKDTQEDGPRKNES) are compositionally biased toward basic and acidic residues. Low complexity predominate over residues 230 to 247 (SGSISSSSTKGKGIKGYS). Residues 265–275 (PDRENSVDGHQ) are compositionally biased toward basic and acidic residues. A compositionally biased stretch (polar residues) spans 317–326 (TSPSDSSETK). The region spanning 470 to 505 (WPLLPNDLLELIMGHLETSFEIFLFRSVCSSWRSVV) is the F-box domain.

As to quaternary structure, interacts with light-activated phyB. Binds directly to PIF1 and COP1. Post-translationally, ubiquitinated by COP1 in darkness; this leads to proteasomal degradation. Mainly expressed in cotyledons, hypocotyls, leaves and roots.

The protein localises to the nucleus. Functionally, together with PCHL, regulates growth and development adaptation to the ambient environment by controlling negatively phytochrome B (phyB) dark reversion, a temperature-dependent thermal relaxation process during which phyB reverts from the active to the inactive state. Contributes to red (R) light-triggered photomorphogenesis. Promotes various light responses such as seed germination, hypocotyl gravitropism and chlorophyll biosynthesis, via direct interaction with PIF1 and COP1. Prevents DNA-binding ability of PIF1 to negatively regulate the expressions of its target genes. Facilitates the physical interaction between phyB and PIF1 and the subsequent light-induced degradation of PIF1. The polypeptide is Protein PHOTOPERIODIC CONTROL OF HYPOCOTYL 1 (Arabidopsis thaliana (Mouse-ear cress)).